The chain runs to 166 residues: MKKDLIAIGKIHGTHGVKGNLKFEIFVKNFYLPEEIYIKDEENELQPLNIETVDRKKGLIKFKNYDTPEKAKEISHRLIYVPEDLLPKLGEDEFYEFQLIGMDVYYNDKLIGKVEKIDDRLSQAYLIIKCTDEKTRHLPFINEFVKDVNVKENKMQITPPEGWFSL.

Residues 91-163 (EDEFYEFQLI…KMQITPPEGW (73 aa)) form the PRC barrel domain.

This sequence belongs to the RimM family. Binds ribosomal protein uS19.

The protein resides in the cytoplasm. Its function is as follows. An accessory protein needed during the final step in the assembly of 30S ribosomal subunit, possibly for assembly of the head region. Essential for efficient processing of 16S rRNA. May be needed both before and after RbfA during the maturation of 16S rRNA. It has affinity for free ribosomal 30S subunits but not for 70S ribosomes. This is Ribosome maturation factor RimM from Sulfurihydrogenibium sp. (strain YO3AOP1).